An 861-amino-acid polypeptide reads, in one-letter code: MNTKISEHTPAMQQYLTIKEDFPDLLLFYRMGDFYELFFDDAKKAGALLNITVTARGKIRGKPIPMAGVPAHALENYLAKLVKQGMSAVICEQVGEVGKGLVERAVTRIITPGTLTDENLLDEARDSILLSLFCFQNNYFFAYADITRGDFQLTMGLNEQELQSEIERLRPAEILMPETANVPAFITALKPHRQPDWYFDSDSSYRLICEYYQTTTIDGFGIAPDDPALSAAGCLLQYLHDTHKYHLPPLKPLQKQHDHQYLLLDATTRRNLELEYTLNGESKHSLIATINRCSTAAGVRTLKRWINQPLIQHEYILERQEAVTALLTHADLDEIAKTLRATADIERITTRIALQTAKPRELAQLRDTLMQLPAINALLQTSAAHSPLLAAATQALMHCPQLGDLLMKALVEAPPLTLKEGGIFAAGYLPELDALHELTDHSAQLLEKMEQEEKAQTGLNTLKIGFNRVHGYYIDIPRSQAANAPAHWIRRQTLKNSERYVTESLKTLEERLLNAQDEALALEKQAYTELLITLDKQRDDLYRLATALAESDVLTCFARLAKEHHYCRPQFSNQIEIQITAGRHPVVEQLSAQPFIANDLVLHQKRQLLILTGPNMGGKSTYMRQTALIVILALAGSYVPAKEARIGRINRIFTRIGASDDLAGGRSTFMVEMTETANILNNADEHSLVIMDEIGRGTSTFDGLSLAWAVADHLLQKNRALTLFATHYFELTALVERHQHGANIHLSAAEDQEHIVFLYHIEEGATSKSYGLHVAKLAGVPQAVIHNANAKLRQLEEKRVPQRAHQALLPIESQKPSLSPQIKNILQQIQEINPDELSPKAAHEWLYQLKTLVRDLDKNEL.

Gly613 to Ser620 provides a ligand contact to ATP.

This sequence belongs to the DNA mismatch repair MutS family.

Functionally, this protein is involved in the repair of mismatches in DNA. It is possible that it carries out the mismatch recognition step. This protein has a weak ATPase activity. The protein is DNA mismatch repair protein MutS of Dichelobacter nodosus (strain VCS1703A).